Reading from the N-terminus, the 335-residue chain is MQPSPPPTELVPSERAVVLLSCALSALGSGLLVATHALWPDLRSRARRLLLFLSLADLLSAASYFYGVLQNFAGPSWDCVLQGALSTFANTSSFFWTVAIALYLYLSIVRAARGPRTDRLLWAFHVVSWGVPLVITVAAVALKKIGYDASDVSVGWCWIDLEAKDHVLWMLLTGKLWEMLAYVLLPLLYLLVRKHINRAHTALSEYRPILSQEHRLLRHSSMADKKLVLIPLIFIGLRVWSTVRFVLTLCGSPAVQTPVLVVLHGIGNTFQGGANCIMFVLCTRAVRTRLFSLCCCCCSSQPPTKSPAGTPKAPAPSKPGESQESQGTPGELPST.

Residues 1 to 15 (MQPSPPPTELVPSER) lie on the Extracellular side of the membrane. Residues 16–36 (AVVLLSCALSALGSGLLVATH) form a helical membrane-spanning segment. Residues 37–48 (ALWPDLRSRARR) are Cytoplasmic-facing. The helical transmembrane segment at 49–69 (LLLFLSLADLLSAASYFYGVL) threads the bilayer. The Extracellular segment spans residues 70-87 (QNFAGPSWDCVLQGALST). Residues 88–108 (FANTSSFFWTVAIALYLYLSI) traverse the membrane as a helical segment. The Cytoplasmic segment spans residues 109-119 (VRAARGPRTDR). Residues 120 to 140 (LLWAFHVVSWGVPLVITVAAV) traverse the membrane as a helical segment. Residues 141–166 (ALKKIGYDASDVSVGWCWIDLEAKDH) lie on the Extracellular side of the membrane. A helical membrane pass occupies residues 167 to 187 (VLWMLLTGKLWEMLAYVLLPL). The Cytoplasmic segment spans residues 188–226 (LYLLVRKHINRAHTALSEYRPILSQEHRLLRHSSMADKK). Residues 227–247 (LVLIPLIFIGLRVWSTVRFVL) form a helical membrane-spanning segment. Over 248–258 (TLCGSPAVQTP) the chain is Extracellular. The chain crosses the membrane as a helical span at residues 259–279 (VLVVLHGIGNTFQGGANCIMF). The Cytoplasmic segment spans residues 280-335 (VLCTRAVRTRLFSLCCCCCSSQPPTKSPAGTPKAPAPSKPGESQESQGTPGELPST). Positions 300–335 (SQPPTKSPAGTPKAPAPSKPGESQESQGTPGELPST) are disordered. Positions 320–335 (GESQESQGTPGELPST) are enriched in polar residues.

It belongs to the G-protein coupled receptor 2 family.

The protein localises to the cell projection. Its subcellular location is the cilium membrane. Functionally, orphan receptor that promotes neuronal differentiation of radial glial progenitors (RGPs). The activity of this receptor is mediated by a G(q)-protein that activates a phosphatidylinositol-calcium second messenger. In Homo sapiens (Human), this protein is G-protein coupled receptor 157 (GPR157).